The following is a 181-amino-acid chain: MPKGGRKGGHKGRARQYTSPEEIDAQLQAEKQKAREEEEQKEGGDGAAGDPKKEKKSLDSDESEDEEDDYQQKRKGVEGLIDIENPNRVAQTTKKVTQLDLDGPKELSRREREEIEKQKAKERYMKMHLAGKTEQAKADLARLAIIRKQREEAARKKEEERKAKDDATLSGKRMQSLSLNK.

Basic residues predominate over residues 1 to 14 (MPKGGRKGGHKGRA). Residues 1 to 117 (MPKGGRKGGH…SRREREEIEK (117 aa)) are disordered. Position 18 is a phosphothreonine (Thr-18). Ser-19 carries the phosphoserine modification. A compositionally biased stretch (basic and acidic residues) spans 30–59 (EKQKAREEEEQKEGGDGAAGDPKKEKKSLD). Residue Lys-52 forms a Glycyl lysine isopeptide (Lys-Gly) (interchain with G-Cter in SUMO2) linkage. 3 positions are modified to phosphoserine: Ser-57, Ser-60, and Ser-63. A compositionally biased stretch (acidic residues) spans 60-69 (SDESEDEEDD). Residue Tyr-70 is modified to Phosphotyrosine. Positions 102 to 117 (DGPKELSRREREEIEK) are enriched in basic and acidic residues. Lys-126 is subject to N6-methyllysine. Residues Lys-132 and Lys-164 each carry the N6-acetyllysine modification. Residues 151–167 (EEAARKKEEERKAKDDA) are compositionally biased toward basic and acidic residues. The disordered stretch occupies residues 151-181 (EEAARKKEEERKAKDDATLSGKRMQSLSLNK). Ser-176 and Ser-178 each carry phosphoserine.

The protein belongs to the PDAP1 family.

Its function is as follows. Enhances PDGFA-stimulated cell growth in fibroblasts, but inhibits the mitogenic effect of PDGFB. This is 28 kDa heat- and acid-stable phosphoprotein (PDAP1) from Homo sapiens (Human).